The chain runs to 473 residues: tRNA-2-methylthio-N(6)-dimethylallyladenosine synthase (473 aa).

The region spanning 5–125 (RKLHIKSYGC…LPQLLARADQ (121 aa)) is the MTTase N-terminal domain. Residues cysteine 14, cysteine 50, cysteine 88, cysteine 166, cysteine 170, and cysteine 173 each contribute to the [4Fe-4S] cluster site. The 233-residue stretch at 152–384 (RARGISAFVT…QQLIDSQQSA (233 aa)) folds into the Radical SAM core domain. A TRAM domain is found at 387–459 (KAAIGQTVDV…RYSLLGELAA (73 aa)).

It belongs to the methylthiotransferase family. MiaB subfamily. Monomer. [4Fe-4S] cluster serves as cofactor.

It localises to the cytoplasm. It catalyses the reaction N(6)-dimethylallyladenosine(37) in tRNA + (sulfur carrier)-SH + AH2 + 2 S-adenosyl-L-methionine = 2-methylsulfanyl-N(6)-dimethylallyladenosine(37) in tRNA + (sulfur carrier)-H + 5'-deoxyadenosine + L-methionine + A + S-adenosyl-L-homocysteine + 2 H(+). Functionally, catalyzes the methylthiolation of N6-(dimethylallyl)adenosine (i(6)A), leading to the formation of 2-methylthio-N6-(dimethylallyl)adenosine (ms(2)i(6)A) at position 37 in tRNAs that read codons beginning with uridine. The chain is tRNA-2-methylthio-N(6)-dimethylallyladenosine synthase from Rhodopseudomonas palustris (strain BisB5).